The following is a 217-amino-acid chain: 2-C-methyl-D-erythritol 4-phosphate cytidylyltransferase (217 aa).

Belongs to the IspD/TarI cytidylyltransferase family. IspD subfamily.

It carries out the reaction 2-C-methyl-D-erythritol 4-phosphate + CTP + H(+) = 4-CDP-2-C-methyl-D-erythritol + diphosphate. The protein operates within isoprenoid biosynthesis; isopentenyl diphosphate biosynthesis via DXP pathway; isopentenyl diphosphate from 1-deoxy-D-xylulose 5-phosphate: step 2/6. Functionally, catalyzes the formation of 4-diphosphocytidyl-2-C-methyl-D-erythritol from CTP and 2-C-methyl-D-erythritol 4-phosphate (MEP). The protein is 2-C-methyl-D-erythritol 4-phosphate cytidylyltransferase of Chlamydia abortus (strain DSM 27085 / S26/3) (Chlamydophila abortus).